The sequence spans 375 residues: Superinfection exclusion protein (375 aa).

A signal peptide spans 1–15 (MIALLILSLACSVSA).

It belongs to the serpin family. Orthopoxvirus OPG040 subfamily. Interacts with OPG185/A56 protein.

It localises to the virion membrane. The protein localises to the host cell membrane. Negatively regulates superinfection and syncytium formation in infected host cells. Acts in concert with OPG185/A56 protein at the host cell membrane by interacting with and inhibiting the mature virion entry/fusion complex (EFC). This mechanism ensures that new virions released from the cell cannot enter already infected cells. The chain is Superinfection exclusion protein (OPG040) from Cynomys gunnisoni (Gunnison's prairie dog).